Consider the following 329-residue polypeptide: MDYASVAMAAAPTTTTTTNVSLRRQRHRKEKLLVLMGATGTGKSRLSIDLAAHFPLEVINSDKMQVYKGLDITTNKISVPDRGGVPHHLLGEVDPARGELTPADFRSLAGKAVSEITGRRKLPVLVGGSNSFIHALLVDRFDSSGPGVFEEGSHSVVSSELRYDCCFLWVDVSVKVLTDYLAKRVDDMLELGMFDELAEFYSPEDEDHDEDSATRTGLRKAIGVPEFDRYFEKFRPGDVEGEDPGRDRVRRGAFEEAVRAIKENTCHLAKRQIGKILRLKGAGWDLRRLDATESFRAAMTSDSGEKCTEIWEKQVLEPSVKIVSRFLDE.

ATP-binding positions include glycine 37 to serine 44, lysine 63, threonine 74, serine 129 to serine 131, lysine 220 to isoleucine 222, and lysine 313.

This sequence belongs to the IPP transferase family. It depends on Mg(2+) as a cofactor. Expressed in roots, stems, leaves and cones.

It carries out the reaction dimethylallyl diphosphate + AMP = N(6)-(dimethylallyl)adenosine 5'-phosphate + diphosphate. The catalysed reaction is dimethylallyl diphosphate + ADP = N(6)-(dimethylallyl)adenosine 5'-diphosphate + diphosphate. It catalyses the reaction dimethylallyl diphosphate + ATP = N(6)-(dimethylallyl)adenosine 5'-triphosphate + diphosphate. In terms of biological role, involved in cytokinin biosynthesis. Catalyzes the transfer of an isopentenyl group from dimethylallyl diphosphate (DMAPP) to ATP, ADP and AMP. GMP, IMP, CMP or UMP are not used as substrates. The polypeptide is Adenylate isopentenyltransferase (Humulus lupulus (European hop)).